A 277-amino-acid chain; its full sequence is Short chain dehydrogenase penD (277 aa).

Residues Ile28, Asp76, and Asn105 each coordinate NADP(+). Catalysis depends on proton donor residues Ser158 and Ser159. 3 residues coordinate NADP(+): Tyr173, Lys177, and Thr209. Tyr173 (proton acceptor) is an active-site residue. The active-site Lowers pKa of active site Tyr is the Lys177.

Belongs to the short-chain dehydrogenases/reductases (SDR) family.

The catalysed reaction is yaequinolone D + NADPH + H(+) = penigequinolone A + NADP(+) + H2O. The enzyme catalyses yaequinolone D + NADPH + H(+) = penigequinolone B + NADP(+) + H2O. The protein operates within secondary metabolite biosynthesis. It participates in alkaloid biosynthesis. Its pathway is mycotoxin biosynthesis. Its function is as follows. Short chain dehydrogenase; part of the gene cluster that mediates the biosynthesis of penigequinolones, potent insecticidal alkaloids that contain a highly modified 10-carbon prenyl group. The first stage is catalyzed by the nonribosomal peptide synthetase penN that condenses anthranilic acid and O-methyl-L-tyrosine to produce 4'-methoxycyclopeptin. 4'-methoxycyclopeptin is then converted to 4'-methoxydehydrocyclopeptin by the ketoglutarate-dependent dioxygenase penM through dehydrogenation to form a double bond between C-alpha and C-beta of the O-methyltyrosine side chain. PenM also converts its first product methoxydehydrocyclopeptin to 4'-methoxycyclopenin. The following conversion of 4'methoxycyclopenin into 4'-methoxyviridicatin is catalyzed by the cyclopenase penL. 4'-methoxyviridicatin is the precursor of quinolone natural products, and is further converted to quinolinone B. The prenyltransferase penI then catalyzes the canonical Friedel-Crafts alkylation of quinolinone B with dimethylallyl cation to yield dimethylallyl quinolone, which is subjected to FAD-dependent dehydrogenation by the FAD-linked oxidoreductase penH to yield conjugated aryl diene. The delta(3') double bond then serves as the site of the second alkylation with DMAPP catalyzed by the prenyltransferase penG to yield a carbenium ion intermediate, which can be attacked by H(2)O to yield a styrenyl quinolone containing a C3'-hydroxyprenyl chain, or undergo cyclization to yield yaequinolones J1 and J2. The conversion of the styrenyl quinolone into the tetrahydrofuran-containing yaequinolone C is performed by the FAD-dependent monooxygenase penE and involves epoxidation of the terminal C7'-C8' olefin, followed by epoxide ring opening initiated by the C3' hydroxyl group. The predicted cysteine hydrolase penJ acts as an epoxide hydrolase that enhances the rate of the 5-exo-tet cyclization step, increasing the yield of yaequinolone C. PenF catalyzes the cationic rearrangement of the epoxide formed by penE (before ring opening to produce yaequinolone C) into yaequinolone D. Finally, the short-chain dehydrogenase/reductase (SDR)-like reductase penD, catalyzes both the dehydration of yaequinolone D and the reduction of the resulting oxonium to yield penigequinolone. The polypeptide is Short chain dehydrogenase penD (Penicillium thymicola).